Reading from the N-terminus, the 283-residue chain is Calpastatin (283 aa).

Positions methionine 1–methionine 15 are enriched in polar residues. Disordered stretches follow at residues methionine 1 to methionine 186 and asparagine 212 to lysine 283. The span at proline 21–alanine 30 shows a compositional bias: basic residues. Lysine 32 participates in a covalent cross-link: Glycyl lysine isopeptide (Lys-Gly) (interchain with G-Cter in SUMO2). Basic and acidic residues predominate over residues valine 46 to serine 65. Lysine 50 carries the post-translational modification N6-acetyllysine. The residue at position 87 (serine 87) is a Phosphoserine. Residues valine 107–glycine 122 show a composition bias toward low complexity. Residue serine 133 is modified to Phosphoserine. Threonine 135 is subject to Phosphothreonine. One copy of the Inhibitory domain 1 repeat lies at isoleucine 170 to serine 222. Residues serine 222 and serine 243 each carry the phosphoserine modification. Basic and acidic residues predominate over residues lysine 249–glutamate 258.

The protein belongs to the protease inhibitor I27 (calpastatin) family.

Its function is as follows. Specific inhibition of calpain (calcium-dependent cysteine protease). Plays a key role in postmortem tenderization of meat and have been proposed to be involved in muscle protein degradation in living tissue. The protein is Calpastatin (CAST) of Chlorocebus aethiops (Green monkey).